Here is a 294-residue protein sequence, read N- to C-terminus: G-protein coupled receptor homolog U51 (294 aa).

At 1 to 14 the chain is on the extracellular side; sequence MKNIDLTNWKLLAE. A helical membrane pass occupies residues 15-35; sequence IYEYLFFFSFFFLCLLVIIVV. Residues 36-47 lie on the Cytoplasmic side of the membrane; that stretch reads KFNNSTVGREYT. A helical transmembrane segment spans residues 48–68; the sequence is FSTFSGMLVYILLLPVKMGML. Residues 69–79 are Extracellular-facing; that stretch reads TKMWDVSTDYC. Residues 80 to 102 form a helical membrane-spanning segment; it reads IILMFLSDFSFIFSSWALTLLAL. Over 103–119 the chain is Cytoplasmic; sequence ERINNFSFSEIKVNETK. The chain crosses the membrane as a helical span at residues 120 to 140; it reads ILKQMSFPIIWVTSIFQAVQI. At 141-166 the chain is on the extracellular side; sequence SMKYKKSQMNLEDDYCLLAIERSAEE. A helical membrane pass occupies residues 167–187; sequence AWILLMYTVVIPTFIVFFYVL. The Cytoplasmic portion of the chain corresponds to 188–200; that stretch reads NKRFLFLERDLNS. Residues 201-221 traverse the membrane as a helical segment; it reads IVTHLSLFLFFGALCFFPASV. At 222-236 the chain is on the extracellular side; it reads LNEFNCNRLFYGLHE. A helical transmembrane segment spans residues 237 to 257; that stretch reads LLIVCLELKIFYVPTMTYIIS. The Cytoplasmic segment spans residues 258-294; sequence CENYRLAAKAFFCKCFKPCFLMPSLRKLQQPTKSTQF.

Belongs to the G-protein coupled receptor 1 family.

Its subcellular location is the host cell membrane. The polypeptide is G-protein coupled receptor homolog U51 (U51) (Human herpesvirus 7 (strain JI) (HHV-7)).